The primary structure comprises 813 residues: Phenylalanine--tRNA ligase beta subunit (813 aa).

Positions 42 to 151 constitute a tRNA-binding domain; it reads AKDFNHVVIG…ADAPVGKAYA (110 aa). One can recognise a B5 domain in the interval 405 to 480; that stretch reads VKKAPVDITI…RLNGYEHIPE (76 aa). Positions 458, 464, 467, and 468 each coordinate Mg(2+). In terms of domain architecture, FDX-ACB spans 720–813; the sequence is SKFPIVERDF…LKKNFDLSVR (94 aa).

The protein belongs to the phenylalanyl-tRNA synthetase beta subunit family. Type 1 subfamily. In terms of assembly, tetramer of two alpha and two beta subunits. Requires Mg(2+) as cofactor.

The protein localises to the cytoplasm. It catalyses the reaction tRNA(Phe) + L-phenylalanine + ATP = L-phenylalanyl-tRNA(Phe) + AMP + diphosphate + H(+). The polypeptide is Phenylalanine--tRNA ligase beta subunit (Bdellovibrio bacteriovorus (strain ATCC 15356 / DSM 50701 / NCIMB 9529 / HD100)).